Consider the following 58-residue polypeptide: Small ribosomal subunit protein bS21A (58 aa).

The interval 38–58 (YEKPSLRRKRKAEAARKGGRN) is disordered. The span at 49 to 58 (AEAARKGGRN) shows a compositional bias: basic and acidic residues.

It belongs to the bacterial ribosomal protein bS21 family.

This chain is Small ribosomal subunit protein bS21A, found in Trichormus variabilis (strain ATCC 29413 / PCC 7937) (Anabaena variabilis).